The following is an 831-amino-acid chain: Periplasmic nitrate reductase (831 aa).

The tat-type signal signal peptide spans 1–31 (MKLSRRDFMKANAAVAAAAAAGLTIPTVAKA). Residues 40 to 96 (IKWDKAPCRFCGTGCGVLVGTQNGRIVASQGDPDSPVNRGLNCVKGYFLPKIMYGKD) form the 4Fe-4S Mo/W bis-MGD-type domain. Residues Cys-47, Cys-50, Cys-54, and Cys-82 each coordinate [4Fe-4S] cluster. Residues Lys-84, Gln-151, Asn-176, Cys-180, 213–220 (WGSNMAEM), 244–248 (STFEH), 263–265 (QTD), Met-373, Gln-377, Asn-483, 509–510 (SD), Lys-532, Asp-559, and 719–728 (TGRVLEHWHT) each bind Mo-bis(molybdopterin guanine dinucleotide). Phe-795 is a binding site for substrate. Residues Asn-803 and Lys-820 each coordinate Mo-bis(molybdopterin guanine dinucleotide).

It belongs to the prokaryotic molybdopterin-containing oxidoreductase family. NasA/NapA/NarB subfamily. Component of the periplasmic nitrate reductase NapAB complex composed of NapA and NapB. The cofactor is [4Fe-4S] cluster. Mo-bis(molybdopterin guanine dinucleotide) is required as a cofactor. Predicted to be exported by the Tat system. The position of the signal peptide cleavage has not been experimentally proven.

The protein resides in the periplasm. It catalyses the reaction 2 Fe(II)-[cytochrome] + nitrate + 2 H(+) = 2 Fe(III)-[cytochrome] + nitrite + H2O. Catalytic subunit of the periplasmic nitrate reductase complex NapAB. Receives electrons from NapB and catalyzes the reduction of nitrate to nitrite. The protein is Periplasmic nitrate reductase of Yersinia enterocolitica serotype O:8 / biotype 1B (strain NCTC 13174 / 8081).